Here is a 106-residue protein sequence, read N- to C-terminus: Nucleoid-associated protein XAC1110 (106 aa).

Over residues 80-89 (KIDAESKDRM) the composition is skewed to basic and acidic residues. The tract at residues 80-106 (KIDAESKDRMGSATAGMQLPPGMKLPF) is disordered.

Belongs to the YbaB/EbfC family. Homodimer.

Its subcellular location is the cytoplasm. It localises to the nucleoid. In terms of biological role, binds to DNA and alters its conformation. May be involved in regulation of gene expression, nucleoid organization and DNA protection. The protein is Nucleoid-associated protein XAC1110 of Xanthomonas axonopodis pv. citri (strain 306).